Here is a 1349-residue protein sequence, read N- to C-terminus: Spike glycoprotein (1349 aa).

Positions 1–13 (MFFILLITLPSVF) are cleaved as a signal peptide. The Extracellular segment spans residues 14 to 1293 (AVIGDLKCNT…GTYEYYVKWP (1280 aa)). Residues 15 to 298 (VIGDLKCNTS…DFMSEIMCKT (284 aa)) form the BetaCoV S1-NTD domain. 7 disulfide bridges follow: C21-C165, C160-C193, C172-C252, C286-C296, C331-C356, C374-C427, and C386-C601. N-linked (GlcNAc...) asparagine; by host glycans are attached at residues N22, N59, and N133. N198 carries N-linked (GlcNAc...) asparagine; by host glycosylation. The BetaCoV S1-CTD domain maps to 329 to 603 (PNCDIEAWLN…DVNSGTTCST (275 aa)). 11 N-linked (GlcNAc...) asparagine; by host glycosylation sites follow: N437, N456, N512, N611, N635, N662, N682, N700, N725, N774, and N881. Fusion peptide stretches follow at residues 900–921 (SAIE…VQAY) and 919–939 (QAYN…VQSY). N923 carries N-linked (GlcNAc...) asparagine; by host glycosylation. A disulfide bridge links C924 with C935. Positions 1000–1050 (QKLIASAFNNALDSIQEGFDATNSALVKIQAVVNANAEALNNLLQQLSNRF) are heptad repeat 1. Residues 1029–1073 (QAVVNANAEALNNLLQQLSNRFGAISASLQEILSRLDALEAKAQI) are a coiled coil. N-linked (GlcNAc...) asparagine; by host glycosylation is found at N1180, N1210, N1220, N1239, N1253, and N1274. A heptad repeat 2 region spans residues 1244–1282 (APDLSFDYINVTFLDLQDEMNRLQEAIKVLNHSYINLKD). Residues 1255–1283 (TFLDLQDEMNRLQEAIKVLNHSYINLKDI) adopt a coiled-coil conformation. The helical transmembrane segment at 1294 to 1314 (WYVWLLICLAGVVMLVLLFFI) threads the bilayer. At 1315 to 1349 (CCCTGCGTSCFKKCGGCFDDYTGHQEFVIKTSHDD) the chain is on the cytoplasmic side. Residues 1345-1349 (TSHDD) carry the KxHxx motif.

Belongs to the betacoronaviruses spike protein family. In terms of assembly, homotrimer; each monomer consists of a S1 and a S2 subunit. The resulting peplomers protrude from the virus surface as spikes. Specific enzymatic cleavages in vivo yield mature proteins. The precursor is processed into S1 and S2 by host cell furin or another cellular protease to yield the mature S1 and S2 proteins. Additionally, a second cleavage leads to the release of a fusion peptide after viral attachment to host cell receptor. Post-translationally, the cytoplasmic Cys-rich domain is palmitoylated. Spike glycoprotein is digested within host endosomes.

It is found in the virion membrane. Its subcellular location is the host endoplasmic reticulum-Golgi intermediate compartment membrane. The protein resides in the host cell membrane. Attaches the virion to the cell membrane by interacting with host receptor, initiating the infection. Its function is as follows. Mediates fusion of the virion and cellular membranes by acting as a class I viral fusion protein. Under the current model, the protein has at least three conformational states: pre-fusion native state, pre-hairpin intermediate state, and post-fusion hairpin state. During viral and target cell membrane fusion, the coiled coil regions (heptad repeats) assume a trimer-of-hairpins structure, positioning the fusion peptide in close proximity to the C-terminal region of the ectodomain. The formation of this structure appears to drive apposition and subsequent fusion of viral and target cell membranes. Functionally, acts as a viral fusion peptide which is unmasked following S2 cleavage occurring upon virus endocytosis. This chain is Spike glycoprotein, found in Porcine hemagglutinating encephalomyelitis virus (strain IAF-404) (HEV).